A 166-amino-acid polypeptide reads, in one-letter code: HTH-type transcriptional regulator PecS (166 aa).

The 136-residue stretch at 25–160 (PMLVIGTLSR…LRALLGRVEK (136 aa)) folds into the HTH marR-type domain.

Its subcellular location is the cytoplasm. The presence of PecM is required to ensure the full regulation of the pecS-pecM intergenic region by PecS. Negatively regulates the expression of genes encoding pectinase and cellulase, which play a major role in virulence, and the expression of the blue pigment indigoidine, which is implicated in pathogenicity and protection from oxidative stress. Represses the expression of genes involved in indigoidine biosynthesis by binding to indA and indC promoter regions. Also binds to promoter sites in the pecS-pecM intergenic region and negatively autoregulates its expression as well as that of pecM. The sequence is that of HTH-type transcriptional regulator PecS from Dickeya dadantii (strain 3937) (Erwinia chrysanthemi (strain 3937)).